A 695-amino-acid polypeptide reads, in one-letter code: Elongation factor G 1 (695 aa).

The 279-residue stretch at 6–284 (KKVRNIGISA…VTRYLPCPAD (279 aa)) folds into the tr-type G domain. GTP is bound by residues 15–22 (AHIDSGKT), 82–86 (DTPGH), and 136–139 (NKCD).

Belongs to the TRAFAC class translation factor GTPase superfamily. Classic translation factor GTPase family. EF-G/EF-2 subfamily.

It localises to the cytoplasm. In terms of biological role, catalyzes the GTP-dependent ribosomal translocation step during translation elongation. During this step, the ribosome changes from the pre-translocational (PRE) to the post-translocational (POST) state as the newly formed A-site-bound peptidyl-tRNA and P-site-bound deacylated tRNA move to the P and E sites, respectively. Catalyzes the coordinated movement of the two tRNA molecules, the mRNA and conformational changes in the ribosome. This chain is Elongation factor G 1, found in Syntrophus aciditrophicus (strain SB).